The sequence spans 376 residues: Geranylgeranyl transferase type-1 subunit beta (376 aa).

4 PFTB repeats span residues 128 to 179 (KRSL…YICG), 192 to 231 (TEKL…ALLS), 259 to 301 (MKFE…HLLT), and 310 to 353 (TELV…ALIE). Geranylgeranyl diphosphate contacts are provided by residues 216–218 (HSG) and 280–283 (RENK). Zn(2+) contacts are provided by D286 and C288. 289 to 292 (YAFW) lines the geranylgeranyl diphosphate pocket. H341 provides a ligand contact to Zn(2+).

Belongs to the protein prenyltransferase subunit beta family. Heterodimer of an alpha (RAM2) and a beta (CDC43) subunit. Requires Zn(2+) as cofactor. Mg(2+) is required as a cofactor.

It is found in the cytoplasm. The catalysed reaction is geranylgeranyl diphosphate + L-cysteinyl-[protein] = S-geranylgeranyl-L-cysteinyl-[protein] + diphosphate. Catalyzes the transfer of a geranyl-geranyl moiety from geranyl-geranyl diphosphate to proteins having the C-terminal sequence Cys-Ile-Ile-Leu or Cys-Val-Leu-Leu. Acts, among other substrates, on Rho1 and Rho2 and CDC42 proteins. Participates in a RAS-like C-terminal modification of proteins involved in nuclear division and bud growth. It is involved in bud positioning and cell polarity. The beta subunit is responsible for isoprenoid and peptide-binding. The sequence is that of Geranylgeranyl transferase type-1 subunit beta (CDC43) from Saccharomyces cerevisiae (strain ATCC 204508 / S288c) (Baker's yeast).